Reading from the N-terminus, the 785-residue chain is Adhesion G-protein coupled receptor G7 (785 aa).

Residues 1–26 form the signal peptide; that stretch reads MRSCRSCNVRVLVAIVCGLLTGIVLG. Residues 27–435 lie on the Extracellular side of the membrane; it reads LGIWRMVIRI…KYPKSLDILS (409 aa). Asparagine 82, asparagine 122, asparagine 133, asparagine 152, asparagine 159, asparagine 178, asparagine 195, asparagine 239, asparagine 289, asparagine 348, asparagine 400, and asparagine 408 each carry an N-linked (GlcNAc...) asparagine glycan. The GAIN-B domain maps to 271–425; sequence FSVQKGSSNS…AVLMSFKKDY (155 aa). Disulfide bonds link cysteine 380/cysteine 407 and cysteine 395/cysteine 409. The GPS stretch occupies residues 380 to 425; sequence CVYWNFLINDWDTQGCQKTGNTTEFLRCNCSHTTNFAVLMSFKKDY. A helical transmembrane segment spans residues 436–456; the sequence is NIGCALSIAGLALTILFQILT. Residues 457–465 are Cytoplasmic-facing; it reads RKIRKTSVT. The helical transmembrane segment at 466–486 threads the bilayer; it reads WVLVSLCSSMLIFNLLFVFGI. Over 487 to 523 the chain is Extracellular; that stretch reads ENSNKNLKTSDSDINVKPENNKIPESDTIETPNPSCT. The chain crosses the membrane as a helical span at residues 524–544; sequence AIAALLHYFLLVTFTWNGLSA. Residues 545–561 lie on the Cytoplasmic side of the membrane; it reads TQLYFLLIRTMKPLPRH. Residues 562–582 traverse the membrane as a helical segment; it reads FIIFISLVGWGVPAIIVGVTI. At 583–623 the chain is on the extracellular side; that stretch reads GSIYALSGNKRYWELDYRQEEICWLAVPKDNDYARSPLLWS. The chain crosses the membrane as a helical span at residues 624–644; that stretch reads FIIPVTIILITNITIFVIITV. At 645–668 the chain is on the cytoplasmic side; it reads KVLWKNNQNLTSTKKVSSLKKVFS. A helical membrane pass occupies residues 669 to 689; it reads TLSIAVVFGVTWILAYAMLIS. At 690 to 694 the chain is on the extracellular side; the sequence is NDDIR. A helical transmembrane segment spans residues 695–715; that stretch reads IVFSYIFCLFNTTQGLQIFIL. Topologically, residues 716 to 785 are cytoplasmic; that stretch reads YTVRTKVFQS…SGMTEETSLS (70 aa).

The protein belongs to the G-protein coupled receptor 2 family. Adhesion G-protein coupled receptor (ADGR) subfamily. In terms of tissue distribution, selectively expressed in the intestinal tissues.

It localises to the membrane. Orphan receptor. The sequence is that of Adhesion G-protein coupled receptor G7 (Adgrg7) from Mus musculus (Mouse).